Reading from the N-terminus, the 467-residue chain is Glutamate--tRNA ligase 1 (467 aa).

The short motif at 8–18 (PSPTGHLHVGG) is the 'HIGH' region element. Residues 230–234 (PLSKR) carry the 'KMSKS' region motif. Lysine 233 lines the ATP pocket.

It belongs to the class-I aminoacyl-tRNA synthetase family. Glutamate--tRNA ligase type 1 subfamily. Monomer.

It is found in the cytoplasm. The enzyme catalyses tRNA(Glu) + L-glutamate + ATP = L-glutamyl-tRNA(Glu) + AMP + diphosphate. Its function is as follows. Catalyzes the attachment of glutamate to tRNA(Glu) in a two-step reaction: glutamate is first activated by ATP to form Glu-AMP and then transferred to the acceptor end of tRNA(Glu). In Petrotoga mobilis (strain DSM 10674 / SJ95), this protein is Glutamate--tRNA ligase 1.